A 62-amino-acid polypeptide reads, in one-letter code: U-stichotoxin-Hau1a (62 aa).

The first 21 residues, 1–21, serve as a signal peptide directing secretion; that stretch reads MKPAIFLMLFVAMFLISEGEG. The propeptide occupies 22–31; that stretch reads FKPKDAPQER. Pro36 carries the post-translational modification Hydroxyproline. Cystine bridges form between Cys41–Cys53 and Cys44–Cys59.

Belongs to the Hau1a/HC18/HC19 family.

The protein resides in the secreted. The protein localises to the nematocyst. In terms of biological role, toxin that is lethal to crab. Does not produce the typical symptoms associated with sodium channel toxins in crabs, suggesting that it likely does not act on sodium channels. The polypeptide is U-stichotoxin-Hau1a (Heteractis aurora (Banded sea anemone)).